Here is a 231-residue protein sequence, read N- to C-terminus: MQLLTFCSFKGGAGKTTALMGLCAALANDGKRVALFDADENRPLTRWRENALQSSTWDPRCEVYSADEMPLLEAAYENAELEGFDYALADTRGGSSELNNTIIASSNLLLIPTMLTPLDIDEALSTYRYVIELMLSENLAIPTAVLRQRVPVGRLTTSQRRMSEMLESLPVVPSPMHERDAFSAMKERGMLHLTLLNMGTDPTMRLIERNLRIAMEEVVVISKLISKILEA.

This is Protein virC1 (virC1) from Rhizobium radiobacter (Agrobacterium tumefaciens).